The sequence spans 574 residues: Isocitrate dehydrogenase kinase/phosphatase (574 aa).

Residues 311–317 and K332 contribute to the ATP site; that span reads APGIRGM. Residue D367 is part of the active site.

It belongs to the AceK family.

It is found in the cytoplasm. The catalysed reaction is L-seryl-[isocitrate dehydrogenase] + ATP = O-phospho-L-seryl-[isocitrate dehydrogenase] + ADP + H(+). Its function is as follows. Bifunctional enzyme which can phosphorylate or dephosphorylate isocitrate dehydrogenase (IDH) on a specific serine residue. This is a regulatory mechanism which enables bacteria to bypass the Krebs cycle via the glyoxylate shunt in response to the source of carbon. When bacteria are grown on glucose, IDH is fully active and unphosphorylated, but when grown on acetate or ethanol, the activity of IDH declines drastically concomitant with its phosphorylation. In Shigella boydii serotype 4 (strain Sb227), this protein is Isocitrate dehydrogenase kinase/phosphatase.